Reading from the N-terminus, the 192-residue chain is Cytidylate kinase (192 aa).

12–20 (GLAGSGTTT) serves as a coordination point for ATP.

This sequence belongs to the cytidylate kinase family. Type 2 subfamily.

It is found in the cytoplasm. It carries out the reaction CMP + ATP = CDP + ADP. It catalyses the reaction dCMP + ATP = dCDP + ADP. This is Cytidylate kinase (cmk) from Pyrococcus horikoshii (strain ATCC 700860 / DSM 12428 / JCM 9974 / NBRC 100139 / OT-3).